We begin with the raw amino-acid sequence, 274 residues long: Methionine aminopeptidase B (274 aa).

His102 contributes to the substrate binding site. A divalent metal cation contacts are provided by Asp120, Asp131, and His194. Residue His201 coordinates substrate. A divalent metal cation contacts are provided by Glu227 and Glu258.

The protein belongs to the peptidase M24A family. Methionine aminopeptidase type 1 subfamily. As to quaternary structure, monomer. It depends on Co(2+) as a cofactor. Zn(2+) is required as a cofactor. Requires Mn(2+) as cofactor. Fe(2+) serves as cofactor.

The enzyme catalyses Release of N-terminal amino acids, preferentially methionine, from peptides and arylamides.. Functionally, removes the N-terminal methionine from nascent proteins. The N-terminal methionine is often cleaved when the second residue in the primary sequence is small and uncharged (Met-Ala-, Cys, Gly, Pro, Ser, Thr, or Val). Requires deformylation of the N(alpha)-formylated initiator methionine before it can be hydrolyzed. The sequence is that of Methionine aminopeptidase B from Synechocystis sp. (strain ATCC 27184 / PCC 6803 / Kazusa).